The sequence spans 65 residues: Large ribosomal subunit protein uL29 (65 aa).

It belongs to the universal ribosomal protein uL29 family.

In Thioalkalivibrio sulfidiphilus (strain HL-EbGR7), this protein is Large ribosomal subunit protein uL29.